The primary structure comprises 309 residues: Tagatose-6-phosphate kinase (309 aa).

The protein belongs to the carbohydrate kinase PfkB family. LacC subfamily.

The catalysed reaction is D-tagatofuranose 6-phosphate + ATP = D-tagatofuranose 1,6-bisphosphate + ADP + H(+). It participates in carbohydrate metabolism; D-tagatose 6-phosphate degradation; D-glyceraldehyde 3-phosphate and glycerone phosphate from D-tagatose 6-phosphate: step 1/2. This Streptococcus pyogenes serotype M2 (strain MGAS10270) protein is Tagatose-6-phosphate kinase.